The sequence spans 300 residues: Cation-efflux pump FieF (300 aa).

Helical transmembrane passes span 12–32 (AAIAATAMASLLLLIKIFAWW), 39–59 (ILAALVDSLVDIGASLTNLLV), 82–102 (AALAQSMFISGSALFLFLTGI), and 114–134 (PGVGVIVTIVALICTIILVSF). Residues D45 and D49 each coordinate Zn(2+). Zn(2+) contacts are provided by H153 and D157. 2 helical membrane passes run 156–176 (SDVMMNGAILLALGLSWYGWH) and 178–198 (ADALFALGIGIYILYSALRMG).

It belongs to the cation diffusion facilitator (CDF) transporter (TC 2.A.4) family. FieF subfamily. Homodimer.

Its subcellular location is the cell inner membrane. It carries out the reaction Zn(2+)(in) + H(+)(out) = Zn(2+)(out) + H(+)(in). The enzyme catalyses Cd(2+)(in) + H(+)(out) = Cd(2+)(out) + H(+)(in). The catalysed reaction is Fe(2+)(in) + H(+)(out) = Fe(2+)(out) + H(+)(in). Its function is as follows. Divalent metal cation transporter which exports Zn(2+), Cd(2+) and possibly Fe(2+). May be involved in zinc and iron detoxification by efflux. The chain is Cation-efflux pump FieF from Escherichia coli O7:K1 (strain IAI39 / ExPEC).